The sequence spans 416 residues: MAGDFSNRAPWKRSACDRCRAQKLRCHRDSGHSTDACLRCLKSGIECVTSKARPTGRPPSRQVQPTVSVEQGDTSSSSHTTDSSPSAGGTDINSMMNFEYDLSLDNILDSIGMQHSDFIVNDNILVDISPLSSQSTSQHSVAQAQTVDPSTIQSTTSYQFNSLPSTSSMDSALPIRSDHVELLLSRLHSKLSAQLYSIRSSPWDVKGTLNLSLAHQGIGQDFENCESHPLVQVSQACTELEKLLSGLRAPASAEHTPSSFSYTPAVPPRLRTTQLLIALSCYIQIVSIYGIIFSKVFDYLLSTSKTSIGSYQSSPLTLYIGGLPIPPNETLSGNLLVHLIEHQLHQIEQLMGLPEHYRVSSRAKDTKDGELGLFGSQHSQSLLNAAIQLGEDRDGNHDDIRCVRALKVVMRQIKDF.

The zn(2)-C6 fungal-type DNA-binding region spans 16–47; it reads CDRCRAQKLRCHRDSGHSTDACLRCLKSGIEC. Residues 50–92 form a disordered region; that stretch reads SKARPTGRPPSRQVQPTVSVEQGDTSSSSHTTDSSPSAGGTDI. The span at 61–73 shows a compositional bias: polar residues; sequence RQVQPTVSVEQGD. A compositionally biased stretch (low complexity) spans 74-86; the sequence is TSSSSHTTDSSPS.

It is found in the nucleus. In terms of biological role, transcription factor that regulates the expression of the gene cluster that mediates the biosynthesis of fusaric acid, a mycotoxin with low to moderate toxicity to animals and humans, but with high phytotoxic properties. This chain is Fusaric acid cluster transcription factor FUB10, found in Fusarium oxysporum f. sp. lycopersici (strain 4287 / CBS 123668 / FGSC 9935 / NRRL 34936) (Fusarium vascular wilt of tomato).